A 206-amino-acid polypeptide reads, in one-letter code: Putative metal transport protein HI_1621 (206 aa).

The next 6 helical transmembrane spans lie at 6–26 (GVLHTPILLAGAVLAVAGIAV), 38–58 (LTALFAAAFFVAGTIHVPVGI), 72–92 (FLGWAVFPAFLIALLLQVIFF), 94–114 (FGGFAVLGVNLCVMATPAVIA), 136–156 (IGAGVIGVGGAGALASFVLML), and 165–185 (LVWLLLVSHIPVFILDSIISV).

This sequence belongs to the CbiM family.

Its subcellular location is the cell membrane. May be involved in metal transport. In Haemophilus influenzae (strain ATCC 51907 / DSM 11121 / KW20 / Rd), this protein is Putative metal transport protein HI_1621.